Consider the following 355-residue polypeptide: Peptide chain release factor 1 (355 aa).

At Gln-233 the chain carries N5-methylglutamine.

It belongs to the prokaryotic/mitochondrial release factor family. Post-translationally, methylated by PrmC. Methylation increases the termination efficiency of RF1.

The protein resides in the cytoplasm. Peptide chain release factor 1 directs the termination of translation in response to the peptide chain termination codons UAG and UAA. This Clostridium tetani (strain Massachusetts / E88) protein is Peptide chain release factor 1.